The sequence spans 336 residues: Fructose-1,6-bisphosphatase class 1 (336 aa).

Residues Glu-92, Asp-115, Leu-117, and Asp-118 each contribute to the Mg(2+) site. Substrate-binding positions include 118-121 (DGSS), Asn-211, Tyr-244, 262-264 (YLY), and Lys-274. Glu-280 contacts Mg(2+).

The protein belongs to the FBPase class 1 family. As to quaternary structure, homotetramer. It depends on Mg(2+) as a cofactor.

The protein resides in the cytoplasm. It catalyses the reaction beta-D-fructose 1,6-bisphosphate + H2O = beta-D-fructose 6-phosphate + phosphate. Its pathway is carbohydrate biosynthesis; gluconeogenesis. The polypeptide is Fructose-1,6-bisphosphatase class 1 (Vibrio cholerae serotype O1 (strain ATCC 39315 / El Tor Inaba N16961)).